The chain runs to 153 residues: Small ribosomal subunit protein bS6 (153 aa).

Residues 97-153 are disordered; the sequence is EEGPSAMMRKADRDRERDDRGGGFRGERDGGGFRGDRGDRGDRGPRRPRDEETADEE. Residues 105 to 147 show a composition bias toward basic and acidic residues; that stretch reads RKADRDRERDDRGGGFRGERDGGGFRGDRGDRGDRGPRRPRDE.

This sequence belongs to the bacterial ribosomal protein bS6 family.

Functionally, binds together with bS18 to 16S ribosomal RNA. The chain is Small ribosomal subunit protein bS6 from Bradyrhizobium sp. (strain BTAi1 / ATCC BAA-1182).